The following is a 271-amino-acid chain: tRNA pseudouridine synthase A (271 aa).

Catalysis depends on D52, which acts as the Nucleophile. Y110 contacts substrate.

It belongs to the tRNA pseudouridine synthase TruA family. As to quaternary structure, homodimer.

The enzyme catalyses uridine(38/39/40) in tRNA = pseudouridine(38/39/40) in tRNA. Formation of pseudouridine at positions 38, 39 and 40 in the anticodon stem and loop of transfer RNAs. The sequence is that of tRNA pseudouridine synthase A from Maridesulfovibrio salexigens (strain ATCC 14822 / DSM 2638 / NCIMB 8403 / VKM B-1763) (Desulfovibrio salexigens).